The chain runs to 219 residues: Octanoyltransferase (219 aa).

The 176-residue stretch at 31-206 (TASADEIWLV…ECLRLMKASA (176 aa)) folds into the BPL/LPL catalytic domain. Substrate contacts are provided by residues 70 to 77 (RGGQVTFH), 137 to 139 (SLG), and 150 to 152 (GLA). The active-site Acyl-thioester intermediate is the cysteine 168.

It belongs to the LipB family.

It localises to the cytoplasm. The enzyme catalyses octanoyl-[ACP] + L-lysyl-[protein] = N(6)-octanoyl-L-lysyl-[protein] + holo-[ACP] + H(+). The protein operates within protein modification; protein lipoylation via endogenous pathway; protein N(6)-(lipoyl)lysine from octanoyl-[acyl-carrier-protein]: step 1/2. Functionally, catalyzes the transfer of endogenously produced octanoic acid from octanoyl-acyl-carrier-protein onto the lipoyl domains of lipoate-dependent enzymes. Lipoyl-ACP can also act as a substrate although octanoyl-ACP is likely to be the physiological substrate. The sequence is that of Octanoyltransferase from Sodalis glossinidius (strain morsitans).